The following is a 315-amino-acid chain: Ribose-phosphate pyrophosphokinase (315 aa).

ATP contacts are provided by residues 37 to 39 (DGE) and 96 to 97 (RQ). The Mg(2+) site is built by H131 and D170. The active site involves K194. Residues R196, D220, and 224 to 228 (DTGGT) each bind D-ribose 5-phosphate.

Belongs to the ribose-phosphate pyrophosphokinase family. Class I subfamily. As to quaternary structure, homohexamer. It depends on Mg(2+) as a cofactor.

It is found in the cytoplasm. It catalyses the reaction D-ribose 5-phosphate + ATP = 5-phospho-alpha-D-ribose 1-diphosphate + AMP + H(+). Its pathway is metabolic intermediate biosynthesis; 5-phospho-alpha-D-ribose 1-diphosphate biosynthesis; 5-phospho-alpha-D-ribose 1-diphosphate from D-ribose 5-phosphate (route I): step 1/1. Involved in the biosynthesis of the central metabolite phospho-alpha-D-ribosyl-1-pyrophosphate (PRPP) via the transfer of pyrophosphoryl group from ATP to 1-hydroxyl of ribose-5-phosphate (Rib-5-P). This Buchnera aphidicola subsp. Schizaphis graminum (strain Sg) protein is Ribose-phosphate pyrophosphokinase.